Reading from the N-terminus, the 188-residue chain is Elongation factor P 1 (188 aa).

The protein belongs to the elongation factor P family.

It localises to the cytoplasm. The protein operates within protein biosynthesis; polypeptide chain elongation. Involved in peptide bond synthesis. Stimulates efficient translation and peptide-bond synthesis on native or reconstituted 70S ribosomes in vitro. Probably functions indirectly by altering the affinity of the ribosome for aminoacyl-tRNA, thus increasing their reactivity as acceptors for peptidyl transferase. The chain is Elongation factor P 1 from Mesorhizobium japonicum (strain LMG 29417 / CECT 9101 / MAFF 303099) (Mesorhizobium loti (strain MAFF 303099)).